The primary structure comprises 125 residues: Small ribosomal subunit protein uS12 (125 aa).

Positions 1–31 (MPTINQLVRHGRQTEVTKSKSPAMQGGPQRR) are disordered. A 3-methylthioaspartic acid modification is found at Asp89. Residues 105–125 (QGVKDRKQSRSKYGAKRPKKA) form a disordered region. Over residues 113–125 (SRSKYGAKRPKKA) the composition is skewed to basic residues.

This sequence belongs to the universal ribosomal protein uS12 family. As to quaternary structure, part of the 30S ribosomal subunit. Contacts proteins S8 and S17. May interact with IF1 in the 30S initiation complex.

In terms of biological role, with S4 and S5 plays an important role in translational accuracy. Its function is as follows. Interacts with and stabilizes bases of the 16S rRNA that are involved in tRNA selection in the A site and with the mRNA backbone. Located at the interface of the 30S and 50S subunits, it traverses the body of the 30S subunit contacting proteins on the other side and probably holding the rRNA structure together. The combined cluster of proteins S8, S12 and S17 appears to hold together the shoulder and platform of the 30S subunit. This Methylibium petroleiphilum (strain ATCC BAA-1232 / LMG 22953 / PM1) protein is Small ribosomal subunit protein uS12.